Consider the following 345-residue polypeptide: Aurora kinase B (345 aa).

Positions 1-25 are disordered; that stretch reads MAQKENAYPWPYGSKTSQSGLNTLS. The span at 14-25 shows a compositional bias: polar residues; sequence SKTSQSGLNTLS. T35 bears the Phosphothreonine mark. Residues 50–77 form a disordered region; it reads TAAPGQKLAENKSQGSTASQGSQNKQPF. A compositionally biased stretch (polar residues) spans 60–77; it reads NKSQGSTASQGSQNKQPF. S62 is modified (phosphoserine). Positions 82 to 332 constitute a Protein kinase domain; it reads FEIGRPLGKG…LAEVAAHPWV (251 aa). Residues 88 to 96 and K111 each bind ATP; that span reads LGKGKFGNV. D205 acts as the Proton acceptor in catalysis. N6-acetyllysine is present on K220. S232 is subject to Phosphoserine. T237 bears the Phosphothreonine; by autocatalysis mark.

The protein belongs to the protein kinase superfamily. Ser/Thr protein kinase family. Aurora subfamily. In terms of assembly, component of the chromosomal passenger complex (CPC) composed of at least BIRC5/survivin, CDCA8/borealin, INCENP, AURKB or AURKC; predominantly independent AURKB- and AURKC-containing complexes exist. Associates with RACGAP1 during M phase. Interacts with SPDYC; this interaction may be required for proper localization of active, Thr-237-phosphorylated AURKB form during prometaphase and metaphase. Interacts with p53/TP53. Interacts (via the middle kinase domain) with NOC2L (via the N- and C-terminus domains). Interacts with CDCA1. Interacts with EVI5. Interacts with JTB. Interacts with NDC80. Interacts with PSMA3. Interacts with RNF2/RING1B. Interacts with SEPTIN1. Interacts with SIRT2. Interacts with TACC1. Interacts with TTC28. Post-translationally, the phosphorylation of Thr-237 requires the binding to INCENP and occurs by means of an autophosphorylation mechanism. Thr-237 phosphorylation is indispensable for the AURKB kinase activity. In terms of processing, acetylated at Lys-220 by KAT5 at kinetochores, increasing AURKB activity and promoting accurate chromosome segregation in mitosis. Ubiquitinated by different BCR (BTB-CUL3-RBX1) E3 ubiquitin ligase complexes. Ubiquitinated by the BCR(KLHL9-KLHL13) E3 ubiquitin ligase complex, ubiquitination leads to removal from mitotic chromosomes and is required for cytokinesis. During anaphase, the BCR(KLHL21) E3 ubiquitin ligase complex recruits the CPC complex from chromosomes to the spindle midzone and mediates the ubiquitination of AURKB. Ubiquitination of AURKB by BCR(KLHL21) E3 ubiquitin ligase complex may not lead to its degradation by the proteasome. Deubiquitinated by USP35; inhibiting CDH1-mediated degradation of AURKB. As to expression, expressed in testis, intestine and spleen. All of them are tissues that contain a large number of proliferating cells. Expressed during S phase, in a cell-cycle-dependent fashion.

The protein resides in the nucleus. It is found in the chromosome. Its subcellular location is the centromere. The protein localises to the kinetochore. It localises to the cytoplasm. The protein resides in the cytoskeleton. It is found in the spindle. Its subcellular location is the midbody. It carries out the reaction L-seryl-[protein] + ATP = O-phospho-L-seryl-[protein] + ADP + H(+). The catalysed reaction is L-threonyl-[protein] + ATP = O-phospho-L-threonyl-[protein] + ADP + H(+). With respect to regulation, activity is greatly increased when AURKB is within the CPC complex. In particular, AURKB-phosphorylated INCENP acts as an activator of AURKB. Positive feedback between HASPIN and AURKB contributes to CPC localization. Its function is as follows. Serine/threonine-protein kinase component of the chromosomal passenger complex (CPC), a complex that acts as a key regulator of mitosis. The CPC complex has essential functions at the centromere in ensuring correct chromosome alignment and segregation and is required for chromatin-induced microtubule stabilization and spindle assembly. Involved in the bipolar attachment of spindle microtubules to kinetochores and is a key regulator for the onset of cytokinesis during mitosis. Required for central/midzone spindle assembly and cleavage furrow formation. Key component of the cytokinesis checkpoint, a process required to delay abscission to prevent both premature resolution of intercellular chromosome bridges and accumulation of DNA damage: phosphorylates CHMP4C, leading to retain abscission-competent VPS4 (VPS4A and/or VPS4B) at the midbody ring until abscission checkpoint signaling is terminated at late cytokinesis. AURKB phosphorylates the CPC complex subunits BIRC5/survivin, CDCA8/borealin and INCENP. Phosphorylation of INCENP leads to increased AURKB activity. Other known AURKB substrates involved in centromeric functions and mitosis are CENPA, DES/desmin, GPAF, KIF2C, NSUN2, RACGAP1, SEPTIN1, VIM/vimentin, HASPIN, and histone H3. A positive feedback loop involving HASPIN and AURKB contributes to localization of CPC to centromeres. Phosphorylation of VIM controls vimentin filament segregation in cytokinetic process, whereas histone H3 is phosphorylated at 'Ser-10' and 'Ser-28' during mitosis (H3S10ph and H3S28ph, respectively). AURKB is also required for kinetochore localization of BUB1 and SGO1. Phosphorylation of p53/TP53 negatively regulates its transcriptional activity. Key regulator of active promoters in resting B- and T-lymphocytes: acts by mediating phosphorylation of H3S28ph at active promoters in resting B-cells, inhibiting RNF2/RING1B-mediated ubiquitination of histone H2A and enhancing binding and activity of the USP16 deubiquitinase at transcribed genes. Acts as an inhibitor of CGAS during mitosis: catalyzes phosphorylation of the N-terminus of CGAS during the G2-M transition, blocking CGAS liquid phase separation and activation, and thereby preventing CGAS-induced autoimmunity. Phosphorylates KRT5 during anaphase and telophase. Phosphorylates ATXN10 which promotes phosphorylation of ATXN10 by PLK1 and may play a role in the regulation of cytokinesis and stimulating the proteasomal degradation of ATXN10. This Mus musculus (Mouse) protein is Aurora kinase B (Aurkb).